The primary structure comprises 1403 residues: Baculoviral IAP repeat-containing protein 1a (1403 aa).

BIR repeat units follow at residues 63 to 128 (RLKT…EFLQ), 162 to 228 (RLES…EFLQ), and 281 to 346 (RMDT…VFLQ). Residues C315, C318, H335, and C342 each contribute to the Zn(2+) site. The NACHT domain maps to 464-758 (SVMCVEGETG…EFLAAMRLTE (295 aa)). K476 serves as a coordination point for ATP.

In terms of assembly, interacts (via NACHT domain) with APAF1 (via CARD and NACHT domains).

In terms of biological role, anti-apoptotic protein which acts by inhibiting the activities of CASP3, CASP7 and CASP9. Can inhibit the autocleavage of pro-CASP9 and cleavage of pro-CASP3 by CASP9. Capable of inhibiting CASP9 autoproteolysis at 'Asp-315' and decreasing the rate of auto proteolysis at 'Asp-330'. Acts as a mediator of neuronal survival in pathological conditions. Prevents motor-neuron apoptosis induced by a variety of signals. This is Baculoviral IAP repeat-containing protein 1a (Naip1) from Mus musculus (Mouse).